Consider the following 435-residue polypeptide: 3-ketoacyl-CoA thiolase (435 aa).

Cysteine 98 acts as the Acyl-thioester intermediate in catalysis. Catalysis depends on proton acceptor residues histidine 391 and cysteine 421.

It belongs to the thiolase-like superfamily. Thiolase family. In terms of assembly, heterotetramer of two alpha chains (FadJ) and two beta chains (FadI).

The protein localises to the cytoplasm. The catalysed reaction is an acyl-CoA + acetyl-CoA = a 3-oxoacyl-CoA + CoA. The protein operates within lipid metabolism; fatty acid beta-oxidation. In terms of biological role, catalyzes the final step of fatty acid oxidation in which acetyl-CoA is released and the CoA ester of a fatty acid two carbons shorter is formed. The polypeptide is 3-ketoacyl-CoA thiolase (Vibrio cholerae serotype O1 (strain ATCC 39541 / Classical Ogawa 395 / O395)).